A 495-amino-acid chain; its full sequence is Glycerol kinase (495 aa).

Thr11 is an ADP binding site. ATP contacts are provided by Thr11, Thr12, and Ser13. A sn-glycerol 3-phosphate-binding site is contributed by Thr11. Residue Arg15 participates in ADP binding. Sn-glycerol 3-phosphate contacts are provided by Arg81, Glu82, Tyr133, and Asp242. The glycerol site is built by Arg81, Glu82, Tyr133, Asp242, and Gln243. ADP is bound by residues Thr264 and Gly307. ATP is bound by residues Thr264, Gly307, Gln311, and Gly408. Gly408 is a binding site for ADP.

It belongs to the FGGY kinase family.

The catalysed reaction is glycerol + ATP = sn-glycerol 3-phosphate + ADP + H(+). It participates in polyol metabolism; glycerol degradation via glycerol kinase pathway; sn-glycerol 3-phosphate from glycerol: step 1/1. Its activity is regulated as follows. Inhibited by fructose 1,6-bisphosphate (FBP). Functionally, key enzyme in the regulation of glycerol uptake and metabolism. Catalyzes the phosphorylation of glycerol to yield sn-glycerol 3-phosphate. This chain is Glycerol kinase, found in Geobacter sp. (strain M21).